We begin with the raw amino-acid sequence, 554 residues long: MPTINVNKVDLERLCNLVLSDKLIEDKFPMMGVEVEEIFEEIDKSGKKQKIIQFSINPDRPDYLSVEGLARGFRGFMGINTGFQQFDVYESDTNVTVLDNESRPYIAFALVKNVQMDEMVLESIINLQEKLHWALGRDRKKLAIGVHDFDMVKGPFTYKEIKGDEIKFAPLGYDSEEMTPKEILEKHEKGQKYGKLIKDGKFPIIVDSKNNVLSMPPIINGTLTKVTKNSKNLLIDITGTEKEAVEEALNIFVCSLFERSGTIYSVNVNGKRYPDLTPRYREISIDLINKKLGLELNAGEIISALKKARMDVKFENEKLMVKIPAYRNDILHNVDLKEEVAKNHGYEKFEGKLPSIATTGSRNPIEKKCKHYQNTMLGFGFFEVMNLTLSNQETLFEKMNLKYSEKDYVEVLKPASIEHRVLRTSILPMLLETLFINKHNVLPQKIFEIGDCVLIDENDTKTDTKCKNIKKISCAVVHPLTNFNEIKTVTEGLLRETFGEFEIENYEHPSFISGRCAKILNNGKEIGFFGEIHPEVILNFELEHPIVAFEILIE.

Residues 276–351 (LTPRYREISI…KNHGYEKFEG (76 aa)) form the B5 domain. Mg(2+) contacts are provided by Asp329, Asp335, Glu338, and Glu339.

This sequence belongs to the phenylalanyl-tRNA synthetase beta subunit family. Type 2 subfamily. Tetramer of two alpha and two beta subunits. Mg(2+) serves as cofactor.

It localises to the cytoplasm. It catalyses the reaction tRNA(Phe) + L-phenylalanine + ATP = L-phenylalanyl-tRNA(Phe) + AMP + diphosphate + H(+). In Methanococcus vannielii (strain ATCC 35089 / DSM 1224 / JCM 13029 / OCM 148 / SB), this protein is Phenylalanine--tRNA ligase beta subunit.